A 520-amino-acid polypeptide reads, in one-letter code: Nonsense-mediated mRNA decay factor SMG9 (520 aa).

Disordered stretches follow at residues 1-94 (MSES…PAPL), 108-143 (KGPV…QRPT), and 341-360 (KPST…SDEG). The residue at position 2 (S2) is an N-acetylserine. S2, S4, S7, S32, and S53 each carry phosphoserine. Residues 36 to 53 (GRERDYIAPWERERRDAS) show a composition bias toward basic and acidic residues. 2 stretches are compositionally biased toward pro residues: residues 78–94 (QPPP…PAPL) and 122–133 (TAPPPPAAPAPP). Low complexity predominate over residues 342–357 (PSTPSPSHESSSSSGS). A Phosphoserine modification is found at S451.

The protein belongs to the SMG9 family. Self-associates to form homodimers and forms heterodimers with SMG8; these assembly forms may represent SMG1C intermediate forms. Component of the SMG1C complex composed of SMG1, SMG8 and SMG9. Interacts with DHX34; the interaction is RNA-independent. Phosphorylated by SMG1.

Its function is as follows. Involved in nonsense-mediated decay (NMD) of mRNAs containing premature stop codons. Is recruited by release factors to stalled ribosomes together with SMG1 and SMG8 (forming the SMG1C protein kinase complex) and, in the SMG1C complex, is required for the efficient association between SMG1 and SMG8. Plays a role in brain, heart, and eye development. The protein is Nonsense-mediated mRNA decay factor SMG9 of Homo sapiens (Human).